The primary structure comprises 239 residues: DNA repair protein RecO (239 aa).

It belongs to the RecO family.

Involved in DNA repair and RecF pathway recombination. The polypeptide is DNA repair protein RecO (Aromatoleum aromaticum (strain DSM 19018 / LMG 30748 / EbN1) (Azoarcus sp. (strain EbN1))).